A 216-amino-acid chain; its full sequence is UPF0193 protein EVG1 homolog (216 aa).

Belongs to the UPF0193 (EVG1) family.

This chain is UPF0193 protein EVG1 homolog, found in Mus musculus (Mouse).